The primary structure comprises 151 residues: Chromophore lyase CpcS/CpeS homolog (151 aa).

It belongs to the CpcS/CpeS biliprotein lyase family.

The protein resides in the plastid. It is found in the chloroplast. Its function is as follows. Might function to covalently attach a chromophore to Cys residue(s) of phycobiliproteins. This Gracilaria tenuistipitata var. liui (Red alga) protein is Chromophore lyase CpcS/CpeS homolog.